Consider the following 148-residue polypeptide: Gametocyte-specific factor 1-like (148 aa).

2 consecutive CHHC U11-48K-type zinc fingers follow at residues 6-33 (FEIC…RRKN) and 40-67 (MATC…VNRS). Zn(2+) is bound by residues cysteine 9, histidine 15, histidine 25, cysteine 29, cysteine 43, histidine 49, histidine 59, and cysteine 63. Positions 67–99 (SAVEEEDTENPLKVSPPSSEQNDDTQQVSPCLP) are disordered. Positions 82-95 (PPSSEQNDDTQQVS) are enriched in polar residues.

This sequence belongs to the UPF0224 (FAM112) family.

This Homo sapiens (Human) protein is Gametocyte-specific factor 1-like (GTSF1L).